Here is a 512-residue protein sequence, read N- to C-terminus: D-alanine--D-alanyl carrier protein ligase (512 aa).

Position 152-153 (152-153) interacts with ATP; sequence TS. Asp-199 provides a ligand contact to D-alanine. 294–299 lines the ATP pocket; the sequence is NAYGPT. D-alanine is bound at residue Val-303. Residues Asp-385, 397–400, and Lys-499 contribute to the ATP site; that span reads YGGR. Lys-499 provides a ligand contact to D-alanine.

This sequence belongs to the ATP-dependent AMP-binding enzyme family. DltA subfamily.

It localises to the cytoplasm. The enzyme catalyses holo-[D-alanyl-carrier protein] + D-alanine + ATP = D-alanyl-[D-alanyl-carrier protein] + AMP + diphosphate. It participates in cell wall biogenesis; lipoteichoic acid biosynthesis. Functionally, catalyzes the first step in the D-alanylation of lipoteichoic acid (LTA), the activation of D-alanine and its transfer onto the D-alanyl carrier protein (Dcp) DltC. In an ATP-dependent two-step reaction, forms a high energy D-alanyl-AMP intermediate, followed by transfer of the D-alanyl residue as a thiol ester to the phosphopantheinyl prosthetic group of the Dcp. D-alanylation of LTA plays an important role in modulating the properties of the cell wall in Gram-positive bacteria, influencing the net charge of the cell wall. In Streptococcus equi subsp. equi (strain 4047), this protein is D-alanine--D-alanyl carrier protein ligase.